We begin with the raw amino-acid sequence, 81 residues long: Conotoxin ViKr92 (81 aa).

The signal sequence occupies residues 1 to 22 (MKLTWMMIVAVLFLTAWTFVTA). Positions 23 to 51 (DDTRYKLENPFLKARNELQKLEASQLNER) are excised as a propeptide. Disulfide bonds link cysteine 53–cysteine 70, cysteine 60–cysteine 74, and cysteine 69–cysteine 78.

Belongs to the conotoxin O1 superfamily. Expressed by the venom duct.

The protein localises to the secreted. This chain is Conotoxin ViKr92, found in Conus virgo (Virgin cone).